Reading from the N-terminus, the 130-residue chain is Small ribosomal subunit protein uS8 (130 aa).

It belongs to the universal ribosomal protein uS8 family. In terms of assembly, part of the 30S ribosomal subunit.

In terms of biological role, one of the primary rRNA binding proteins, it binds directly to 16S rRNA central domain where it helps coordinate assembly of the platform of the 30S subunit. The protein is Small ribosomal subunit protein uS8 of Pyrococcus abyssi (strain GE5 / Orsay).